The primary structure comprises 558 residues: Atlastin-1 (558 aa).

Positions 1–28 (MAKSRRDRNSWGGFSEKSSDWSSEEEEP) are disordered. Residues 1–34 (MAKSRRDRNSWGGFSEKSSDWSSEEEEPVRKAGP) are N-terminal hypervariable region (HVR). Residues 1–449 (MAKSRRDRNS…NIFHAARTPA (449 aa)) are Cytoplasmic-facing. Phosphoserine occurs at positions 10, 22, and 23. Residues 64 to 309 (DKEVVAVSVA…LIPWLLSPER (246 aa)) form the GB1/RHD3-type G domain. The GDP site is built by Arg-77, Lys-78, Gly-79, Lys-80, Ser-81, Phe-82, Gln-148, Arg-217, Asp-218, Val-276, and Asn-279. GTP contacts are provided by Arg-77, Lys-78, Gly-79, Lys-80, Ser-81, and Phe-82. Ser-81 contacts Mg(2+). GTP is bound by residues Arg-217, Asp-218, and Val-276. Positions 347 to 438 (MLQATAEANN…YIQYIKHNDS (92 aa)) are 3HB (three-helix bundle) domain. Lys-395 bears the N6-acetyllysine mark. Residues 412-439 (EFSRRYLQQLESEIDELYIQYIKHNDSK) are a coiled coil. A linker region spans residues 439–447 (KNIFHAART). A helical membrane pass occupies residues 450-470 (TLFVVIFITYVIAGVTGFIGL). A topological domain (lumenal) is located at residue Asp-471. The helical transmembrane segment at 472-492 (IIASLCNMIMGLTLITLCTWA) threads the bilayer. Residues 493 to 558 (YIRYSGEYRE…PTQQPEKKKI (66 aa)) are Cytoplasmic-facing. The tract at residues 521–558 (NEALYKLYSAAATHRHLCHQAFPAPKSEPTQQPEKKKI) is autoinhibitory domain.

Belongs to the TRAFAC class dynamin-like GTPase superfamily. GB1/RHD3 GTPase family. GB1 subfamily. In terms of assembly, monomeric and homodimeric. The homodimer, transiently formed by two molecules on opposing membranes, is the active form mediating ER membrane fusion. Interacts with REEP1, REEP5, RTN3 and RTN4 (via the transmembrane region); these proteins are involved in endoplasmic reticulum tubular network organization. Interacts with ZFYVE27; both proteins are involved in endoplasmic reticulum tubular network organization. Interacts with ARL6IP1; both proteins are involved in endoplasmic reticulum tubular network organization. Interacts with SPAST; the interaction is direct, could recruit SPAST to Golgi membranes. Interacts (via N-terminal region) with MAP4K4 (via CNH regulatory domain). May interact with TMED2. Interacts with CPT1C. Post-translationally, phosphorylated. Phosphorylation, by different kinases, of the N-terminal hypervariable region (HVR) regulates the ATL1-mediated membrane tethering step.

Its subcellular location is the endoplasmic reticulum membrane. It localises to the golgi apparatus membrane. It is found in the cell projection. The protein localises to the axon. It carries out the reaction GTP + H2O = GDP + phosphate + H(+). Its function is as follows. Atlastin-1 (ATL1) is a membrane-anchored GTPase that mediates the GTP-dependent fusion of endoplasmic reticulum (ER) membranes, maintaining the continuous ER network. It facilitates the formation of three-way junctions where ER tubules intersect. Two atlastin-1 on neighboring ER tubules bind GTP and form loose homodimers through the GB1/RHD3-type G domains and 3HB regions. Upon GTP hydrolysis, the 3HB regions tighten, pulling the membranes together to drive their fusion. After fusion, the homodimer disassembles upon release of inorganic phosphate (Pi). Subsequently, GDP dissociates, resetting the monomers to a conformation ready for a new fusion cycle. May also regulate more or less directly Golgi biogenesis. Indirectly regulates axonal development. The protein is Atlastin-1 of Mus musculus (Mouse).